Here is a 127-residue protein sequence, read N- to C-terminus: Large ribosomal subunit protein bL19 (127 aa).

It belongs to the bacterial ribosomal protein bL19 family.

Functionally, this protein is located at the 30S-50S ribosomal subunit interface and may play a role in the structure and function of the aminoacyl-tRNA binding site. In Jannaschia sp. (strain CCS1), this protein is Large ribosomal subunit protein bL19.